The chain runs to 203 residues: Large ribosomal subunit protein uL13 (203 aa).

Residue alanine 2 is modified to N-acetylalanine. Position 59 is a citrulline (arginine 59). A Phosphoserine modification is found at serine 77. A Citrulline modification is found at arginine 140. Lysine 191 is modified (N6-acetyllysine).

This sequence belongs to the universal ribosomal protein uL13 family. As to quaternary structure, component of the 60S ribosome. Component of the GAIT complex. Interacts with EIF4G1. In terms of processing, phosphorylation at Ser-77 upon interferon-gamma treatment in monocytes involves a DAPK1-DAPK3 kinase cascade and is causing release from the ribosome, association with the GAIT complex and subsequent involvement in transcript-selective translation inhibition. Post-translationally, citrullinated by PADI4.

The protein localises to the cytoplasm. Associated with ribosomes but is not required for canonical ribosome function and has extra-ribosomal functions. Component of the GAIT (gamma interferon-activated inhibitor of translation) complex which mediates interferon-gamma-induced transcript-selective translation inhibition in inflammation processes. Upon interferon-gamma activation and subsequent phosphorylation dissociates from the ribosome and assembles into the GAIT complex which binds to stem loop-containing GAIT elements in the 3'-UTR of diverse inflammatory mRNAs (such as ceruplasmin) and suppresses their translation. In the GAIT complex interacts with m7G cap-bound eIF4G at or near the eIF3-binding site and blocks the recruitment of the 43S ribosomal complex. Involved in methylation of rRNA. The polypeptide is Large ribosomal subunit protein uL13 (RPL13A) (Oryctolagus cuniculus (Rabbit)).